We begin with the raw amino-acid sequence, 350 residues long: MSKFWSPFVSDLVPYVPGEQPKLTRLVKLNTNENPYGPSPKAIDAMRTALTDDLRLYPDPNSDLLKHAVADYYKVQPSQVFLGNGSDEVLAHIFHALFQHDAPLLFPDISYSFYPVYCGLYGIDYETVPLDEQFQIRAEDYARPNAGIIFPNPNAPTGCLLGLDKVEQIIKASPDSVVVVDEAYIDFGGETAITLVDRYPNLLVTQTLSKSRSLAGLRVGLAVGHPDLIEALERVKNSFNSYPLDRMANVGGAAAFEDREHFETTRNKVIESREALVEQLQGKGFEVLPSAANFIFARHPRHDAAALAAKLREQGVIVRHFKQQRIAQFLRISIGTPEQHQALLEGLSDL.

The residue at position 210 (Lys-210) is an N6-(pyridoxal phosphate)lysine.

The protein belongs to the class-II pyridoxal-phosphate-dependent aminotransferase family. Histidinol-phosphate aminotransferase subfamily. Homodimer. Pyridoxal 5'-phosphate is required as a cofactor.

The enzyme catalyses L-histidinol phosphate + 2-oxoglutarate = 3-(imidazol-4-yl)-2-oxopropyl phosphate + L-glutamate. It functions in the pathway amino-acid biosynthesis; L-histidine biosynthesis; L-histidine from 5-phospho-alpha-D-ribose 1-diphosphate: step 7/9. The polypeptide is Histidinol-phosphate aminotransferase (Pseudomonas syringae pv. syringae (strain B728a)).